Here is a 276-residue protein sequence, read N- to C-terminus: BES1/BZR1 homolog protein 1 (276 aa).

Disordered regions lie at residues M1–R30, T76–F125, and S155–R191. The segment at R14–T87 is required for DNA-binding. Residues P84–F103 are compositionally biased toward polar residues. The span at Q104–P122 shows a compositional bias: low complexity. T159 is modified (phosphothreonine). A compositionally biased stretch (low complexity) spans S164 to R174. The span at W175–T189 shows a compositional bias: polar residues.

The protein belongs to the BZR/LAT61 family. In terms of processing, phosphorylated. Phosphorylation increases protein degradation.

The protein is BES1/BZR1 homolog protein 1 (BEH1) of Arabidopsis thaliana (Mouse-ear cress).